Consider the following 77-residue polypeptide: uncharacterized protein (77 aa).

Basic and acidic residues-rich tracts occupy residues 1–24 (CPVA…EDQR) and 37–58 (EGPK…ERGP). Residues 1–77 (CPVAEEHFLV…RHGPKRKPAK (77 aa)) are disordered. The segment covering 66–77 (RPRHGPKRKPAK) has biased composition (basic residues).

This is an uncharacterized protein from Macaca fascicularis (Crab-eating macaque).